The primary structure comprises 102 residues: A-type ATP synthase subunit F (102 aa).

It belongs to the V-ATPase F subunit family. As to quaternary structure, has multiple subunits with at least A(3), B(3), C, D, E, F, H, I and proteolipid K(x).

Its subcellular location is the cell membrane. Its function is as follows. Component of the A-type ATP synthase that produces ATP from ADP in the presence of a proton gradient across the membrane. This chain is A-type ATP synthase subunit F, found in Thermococcus sibiricus (strain DSM 12597 / MM 739).